Consider the following 68-residue polypeptide: Small integral membrane protein 45 (68 aa).

A helical transmembrane segment spans residues 7-27 (WFVPVYLVISVLILVGFGACI).

Highly expressed in brain.

It is found in the nucleus. Its subcellular location is the cytoplasm. It localises to the membrane. In terms of biological role, plays a role in the regulation of neuron maturation. This chain is Small integral membrane protein 45, found in Homo sapiens (Human).